Consider the following 122-residue polypeptide: Large ribosomal subunit protein uL14 (122 aa).

It belongs to the universal ribosomal protein uL14 family. Part of the 50S ribosomal subunit. Forms a cluster with proteins L3 and L19. In the 70S ribosome, L14 and L19 interact and together make contacts with the 16S rRNA in bridges B5 and B8.

Binds to 23S rRNA. Forms part of two intersubunit bridges in the 70S ribosome. The protein is Large ribosomal subunit protein uL14 of Polynucleobacter asymbioticus (strain DSM 18221 / CIP 109841 / QLW-P1DMWA-1) (Polynucleobacter necessarius subsp. asymbioticus).